The following is an 81-amino-acid chain: Photosystem I iron-sulfur center (81 aa).

4Fe-4S ferredoxin-type domains follow at residues 2-31 and 39-68; these read AHSV…MVPW and IASA…VRVY. Positions 11, 14, 17, 21, 48, 51, 54, and 58 each coordinate [4Fe-4S] cluster.

As to quaternary structure, the eukaryotic PSI reaction center is composed of at least 11 subunits. The cofactor is [4Fe-4S] cluster.

It is found in the plastid. It localises to the chloroplast thylakoid membrane. It catalyses the reaction reduced [plastocyanin] + hnu + oxidized [2Fe-2S]-[ferredoxin] = oxidized [plastocyanin] + reduced [2Fe-2S]-[ferredoxin]. Its function is as follows. Apoprotein for the two 4Fe-4S centers FA and FB of photosystem I (PSI); essential for photochemical activity. FB is the terminal electron acceptor of PSI, donating electrons to ferredoxin. The C-terminus interacts with PsaA/B/D and helps assemble the protein into the PSI complex. Required for binding of PsaD and PsaE to PSI. PSI is a plastocyanin-ferredoxin oxidoreductase, converting photonic excitation into a charge separation, which transfers an electron from the donor P700 chlorophyll pair to the spectroscopically characterized acceptors A0, A1, FX, FA and FB in turn. This Chlorokybus atmophyticus (Soil alga) protein is Photosystem I iron-sulfur center.